Consider the following 300-residue polypeptide: UDP-N-acetylenolpyruvoylglucosamine reductase (300 aa).

The FAD-binding PCMH-type domain occupies 27–216; that stretch reads RVGGPADVIF…TERREKTQPI (190 aa). Residue Arg-172 is part of the active site. Ser-223 acts as the Proton donor in catalysis. Glu-293 is a catalytic residue.

Belongs to the MurB family. Requires FAD as cofactor.

It is found in the cytoplasm. It catalyses the reaction UDP-N-acetyl-alpha-D-muramate + NADP(+) = UDP-N-acetyl-3-O-(1-carboxyvinyl)-alpha-D-glucosamine + NADPH + H(+). Its pathway is cell wall biogenesis; peptidoglycan biosynthesis. Functionally, cell wall formation. The protein is UDP-N-acetylenolpyruvoylglucosamine reductase of Phenylobacterium zucineum (strain HLK1).